We begin with the raw amino-acid sequence, 448 residues long: RING finger protein 44 (448 aa).

The segment at 396–437 adopts an RING-type; atypical zinc-finger fold; the sequence is CVVCFSDFESRQLLRVLPCNHEFHAKCVDKWLKTNRTCPICR.

The sequence is that of RING finger protein 44 (rnf44) from Danio rerio (Zebrafish).